Here is a 443-residue protein sequence, read N- to C-terminus: Tubulin beta chain (443 aa).

Residues glutamine 11, glutamate 69, serine 138, glycine 142, threonine 143, glycine 144, asparagine 204, and asparagine 226 each contribute to the GTP site. Glutamate 69 serves as a coordination point for Mg(2+). Residues 424–443 (QYQDATAEEEGEFEEEEGEN) form a disordered region. The segment covering 429 to 443 (TAEEEGEFEEEEGEN) has biased composition (acidic residues).

Belongs to the tubulin family. In terms of assembly, dimer of alpha and beta chains. A typical microtubule is a hollow water-filled tube with an outer diameter of 25 nm and an inner diameter of 15 nM. Alpha-beta heterodimers associate head-to-tail to form protofilaments running lengthwise along the microtubule wall with the beta-tubulin subunit facing the microtubule plus end conferring a structural polarity. Microtubules usually have 13 protofilaments but different protofilament numbers can be found in some organisms and specialized cells. The cofactor is Mg(2+).

The protein resides in the cytoplasm. The protein localises to the cytoskeleton. Its function is as follows. Tubulin is the major constituent of microtubules, a cylinder consisting of laterally associated linear protofilaments composed of alpha- and beta-tubulin heterodimers. Microtubules grow by the addition of GTP-tubulin dimers to the microtubule end, where a stabilizing cap forms. Below the cap, tubulin dimers are in GDP-bound state, owing to GTPase activity of alpha-tubulin. This chain is Tubulin beta chain (BETA-TT1), found in Tetrahymena pyriformis.